Reading from the N-terminus, the 84-residue chain is uncharacterized protein (84 aa).

This is an uncharacterized protein from Rickettsia prowazekii (strain Madrid E).